We begin with the raw amino-acid sequence, 129 residues long: uncharacterized protein (129 aa).

It is found in the cytoplasm. Its subcellular location is the cytosol. It localises to the nucleus. This is an uncharacterized protein from Schizosaccharomyces pombe (strain 972 / ATCC 24843) (Fission yeast).